The following is a 210-amino-acid chain: Protein-methionine-sulfoxide reductase heme-binding subunit MsrQ (210 aa).

A run of 6 helical transmembrane segments spans residues 8–28, 37–57, 75–95, 110–130, 147–167, and 169–189; these read LAVFLAACVAPVWWLYQAWIF, VLVENFGLATLVMLLITLAMT, LGLWCFAYVVLHMTMYALFIL, PYIIVGALAFLGLLALAVTSN, LVYVILGLGLLHMFWIVRADL, and EWALYAGIGAILLLLRVPMIA.

The protein belongs to the MsrQ family. As to quaternary structure, heterodimer of a catalytic subunit (MsrP) and a heme-binding subunit (MsrQ). It depends on FMN as a cofactor. Heme b serves as cofactor.

The protein localises to the cell inner membrane. Its function is as follows. Part of the MsrPQ system that repairs oxidized periplasmic proteins containing methionine sulfoxide residues (Met-O), using respiratory chain electrons. Thus protects these proteins from oxidative-stress damage caused by reactive species of oxygen and chlorine generated by the host defense mechanisms. MsrPQ is essential for the maintenance of envelope integrity under bleach stress, rescuing a wide series of structurally unrelated periplasmic proteins from methionine oxidation. MsrQ provides electrons for reduction to the reductase catalytic subunit MsrP, using the quinone pool of the respiratory chain. This chain is Protein-methionine-sulfoxide reductase heme-binding subunit MsrQ, found in Pseudomonas syringae pv. tomato (strain ATCC BAA-871 / DC3000).